Here is a 262-residue protein sequence, read N- to C-terminus: uncharacterized protein (262 aa).

An N-terminal signal peptide occupies residues 1-22; sequence MGYLKRFALYISVMILIFAIAG. The N-palmitoyl cysteine moiety is linked to residue cysteine 23. A lipid anchor (S-diacylglycerol cysteine) is attached at cysteine 23.

Belongs to the staphylococcal tandem lipoprotein family.

It localises to the cell membrane. This is an uncharacterized protein from Staphylococcus aureus (strain NCTC 8325 / PS 47).